The chain runs to 537 residues: Chaperonin GroEL 2 (537 aa).

ATP contacts are provided by residues 29 to 32 (TLGP), 86 to 90 (DGTTT), glycine 413, 477 to 479 (NAA), and aspartate 493.

This sequence belongs to the chaperonin (HSP60) family. Forms a cylinder of 14 subunits composed of two heptameric rings stacked back-to-back. Interacts with the co-chaperonin GroES.

The protein resides in the cytoplasm. It carries out the reaction ATP + H2O + a folded polypeptide = ADP + phosphate + an unfolded polypeptide.. Together with its co-chaperonin GroES, plays an essential role in assisting protein folding. The GroEL-GroES system forms a nano-cage that allows encapsulation of the non-native substrate proteins and provides a physical environment optimized to promote and accelerate protein folding. The protein is Chaperonin GroEL 2 of Thermobifida fusca (strain YX).